Consider the following 513-residue polypeptide: MADKLIIFDTTLRDGEQSPGASMTKDEKLRIARQLERLRVDVIEAGFAASSNGDFEAVRAIADVIKESTVCSLARANDRDIARAAEALKSAARSRIHTFIATSELHMEKKLRMTREQVLEQARLSIRFARNLCEDIEFSPEDGYRSDPDFLCRVIEAVINEGATTINVPDTVGYGIPELYGNFIRTLRERVPNSDKAVWSVHCHNDLGMAVANSLAGVKIGGARQIECTINGLGERAGNCSLEEVVMAVRTRRDHFGLEVGIDTTQIVPASRLVSQTTGFIVQPNKAVVGANAFAHASGIHQDGVLKARDTYEIMRAEDVGWSANKIVLGKLSGRNAFKQRLQELGIELESETDVNAAFARFKDLADRKSDIFDEDIIALVGDESVTHEQETYRLLSLEQQSATGERPHAKVAFAVGETEFHAESEGNGPVDASLKAIESKLKSGAEMLLYSVNAITSGSTESQGEVTVRLQHGGRVVNGVGADPDIVVASAKAYLSALNKLHSKNERVAAQG.

The Pyruvate carboxyltransferase domain maps to 5 to 268; the sequence is LIIFDTTLRD…EVGIDTTQIV (264 aa). Asp-14, His-202, His-204, and Asn-239 together coordinate Mn(2+). The regulatory domain stretch occupies residues 394–513; the sequence is RLLSLEQQSA…SKNERVAAQG (120 aa).

It belongs to the alpha-IPM synthase/homocitrate synthase family. LeuA type 1 subfamily. As to quaternary structure, homodimer. The cofactor is Mn(2+).

The protein localises to the cytoplasm. It catalyses the reaction 3-methyl-2-oxobutanoate + acetyl-CoA + H2O = (2S)-2-isopropylmalate + CoA + H(+). It functions in the pathway amino-acid biosynthesis; L-leucine biosynthesis; L-leucine from 3-methyl-2-oxobutanoate: step 1/4. Catalyzes the condensation of the acetyl group of acetyl-CoA with 3-methyl-2-oxobutanoate (2-ketoisovalerate) to form 3-carboxy-3-hydroxy-4-methylpentanoate (2-isopropylmalate). The chain is 2-isopropylmalate synthase from Methylibium petroleiphilum (strain ATCC BAA-1232 / LMG 22953 / PM1).